The following is a 461-amino-acid chain: tRNA(Ile)-lysidine synthase (461 aa).

26-31 contacts ATP; sequence SGGPDS.

It belongs to the tRNA(Ile)-lysidine synthase family.

The protein localises to the cytoplasm. The catalysed reaction is cytidine(34) in tRNA(Ile2) + L-lysine + ATP = lysidine(34) in tRNA(Ile2) + AMP + diphosphate + H(+). Ligates lysine onto the cytidine present at position 34 of the AUA codon-specific tRNA(Ile) that contains the anticodon CAU, in an ATP-dependent manner. Cytidine is converted to lysidine, thus changing the amino acid specificity of the tRNA from methionine to isoleucine. In Clostridium acetobutylicum (strain ATCC 824 / DSM 792 / JCM 1419 / IAM 19013 / LMG 5710 / NBRC 13948 / NRRL B-527 / VKM B-1787 / 2291 / W), this protein is tRNA(Ile)-lysidine synthase.